The primary structure comprises 115 residues: NAD(P)H-quinone oxidoreductase subunit M (115 aa).

Belongs to the complex I NdhM subunit family. NDH-1 can be composed of about 15 different subunits; different subcomplexes with different compositions have been identified which probably have different functions.

Its subcellular location is the cellular thylakoid membrane. It carries out the reaction a plastoquinone + NADH + (n+1) H(+)(in) = a plastoquinol + NAD(+) + n H(+)(out). The enzyme catalyses a plastoquinone + NADPH + (n+1) H(+)(in) = a plastoquinol + NADP(+) + n H(+)(out). In terms of biological role, NDH-1 shuttles electrons from an unknown electron donor, via FMN and iron-sulfur (Fe-S) centers, to quinones in the respiratory and/or the photosynthetic chain. The immediate electron acceptor for the enzyme in this species is believed to be plastoquinone. Couples the redox reaction to proton translocation, and thus conserves the redox energy in a proton gradient. Cyanobacterial NDH-1 also plays a role in inorganic carbon-concentration. In Trichodesmium erythraeum (strain IMS101), this protein is NAD(P)H-quinone oxidoreductase subunit M.